The primary structure comprises 319 residues: ATP-dependent 6-phosphofructokinase (319 aa).

Position 11 (Gly-11) interacts with ATP. Residue 21 to 25 (RAVVR) coordinates ADP. ATP-binding positions include 72-73 (RC) and 102-105 (GDGS). Asp-103 serves as a coordination point for Mg(2+). Substrate is bound at residue 125–127 (TID). Catalysis depends on Asp-127, which acts as the Proton acceptor. Position 154 (Arg-154) interacts with ADP. Substrate is bound by residues Arg-162 and 169–171 (MGR). ADP-binding positions include 185-187 (GAE), Lys-211, and 213-215 (KMH). Substrate is bound by residues Glu-222, Arg-243, and 249-252 (HIQR).

The protein belongs to the phosphofructokinase type A (PFKA) family. ATP-dependent PFK group I subfamily. Prokaryotic clade 'B1' sub-subfamily. In terms of assembly, homotetramer. The cofactor is Mg(2+).

The protein localises to the cytoplasm. It carries out the reaction beta-D-fructose 6-phosphate + ATP = beta-D-fructose 1,6-bisphosphate + ADP + H(+). The protein operates within carbohydrate degradation; glycolysis; D-glyceraldehyde 3-phosphate and glycerone phosphate from D-glucose: step 3/4. Allosterically activated by ADP and other diphosphonucleosides, and allosterically inhibited by phosphoenolpyruvate. Catalyzes the phosphorylation of D-fructose 6-phosphate to fructose 1,6-bisphosphate by ATP, the first committing step of glycolysis. This Clostridium botulinum (strain ATCC 19397 / Type A) protein is ATP-dependent 6-phosphofructokinase.